Here is a 220-residue protein sequence, read N- to C-terminus: Metalloproteinase inhibitor 2 (220 aa).

The signal sequence occupies residues 1–26 (MGAAARSLRLALGLLLLATLPRPADA). Zn(2+) is bound at residue C27. Involved in metalloproteinase-binding regions lie at residues 27–30 (CSCS) and 95–96 (SA). 6 cysteine pairs are disulfide-bonded: C27-C98, C29-C127, C39-C152, C154-C201, C159-C164, and C172-C193. Residues 27 to 152 (CSCSPVHPQQ…SLNHRYQMGC (126 aa)) enclose the NTR domain.

This sequence belongs to the protease inhibitor I35 (TIMP) family. Interacts (via the C-terminal) with MMP2 (via the C-terminal PEX domain); the interaction inhibits the MMP2 activity. In terms of processing, the activity of TIMP2 is dependent on the presence of disulfide bonds.

The protein localises to the secreted. Complexes with metalloproteinases (such as collagenases) and irreversibly inactivates them by binding to their catalytic zinc cofactor. This chain is Metalloproteinase inhibitor 2 (TIMP2), found in Canis lupus familiaris (Dog).